The chain runs to 544 residues: Secreted aspartic protease 9 (544 aa).

A signal peptide spans 1–17; the sequence is MRLNSVALLSLVATALA. A disordered region spans residues 31 to 50; the sequence is GESKDDLSPEDDSNPRFVKR. Positions 65 to 479 constitute a Peptidase A1 domain; the sequence is YMATLKIGSN…DLDDYEVSLA (415 aa). The active site involves Asp-83. 83-85 is a pepstatin A binding site; it reads DTG. The cysteines at positions 98 and 195 are disulfide-linked. N-linked (GlcNAc...) asparagine glycans are attached at residues Asn-212, Asn-240, and Asn-252. Residue Asp-371 is part of the active site. Residue 371–375 coordinates pepstatin A; sequence DTGST. A disulfide bridge connects residues Cys-406 and Cys-441. N-linked (GlcNAc...) asparagine glycosylation is found at Asn-422 and Asn-499. Residues 500 to 519 are disordered; the sequence is SSGSGTTSSSGTSTSTSTRH. Ser-520 is lipidated: GPI-anchor amidated serine. Positions 521-544 are cleaved as a propeptide — removed in mature form; that stretch reads AGSIISKPVYGLLLSLLISCYVLV. A helical transmembrane segment spans residues 524–544; it reads IISKPVYGLLLSLLISCYVLV.

This sequence belongs to the peptidase A1 family. Monomer. In terms of processing, the GPI-anchor is attached to the protein in the endoplasmic reticulum and serves to target the protein to the cell surface. There, the glucosamine-inositol phospholipid moiety is cleaved off and the GPI-modified mannoprotein is covalently attached via its lipidless GPI glycan remnant to the 1,6-beta-glucan of the outer cell wall layer.

It localises to the cell membrane. The protein localises to the secreted. The protein resides in the cell wall. It carries out the reaction Preferential cleavage at the carboxyl of hydrophobic amino acids, but fails to cleave 15-Leu-|-Tyr-16, 16-Tyr-|-Leu-17 and 24-Phe-|-Phe-25 of insulin B chain. Activates trypsinogen, and degrades keratin.. Secreted aspartic peptidases (SAPs) are a group of ten acidic hydrolases considered as key virulence factors. These enzymes supply the fungus with nutrient amino acids as well as are able to degrade the selected host's proteins involved in the immune defense. Moreover, acts toward human hemoglobin though limited proteolysis to generate a variety of antimicrobial hemocidins, enabling to compete with the other microorganisms of the same physiological niche using the microbicidal peptides generated from the host protein. Its function is as follows. Plays a key role in defense against host by cleaving histatin-5 (Hst 5), a peptide from human saliva that carries out fungicidal activity. The cleavage rate decreases in an order of SAP2 &gt; SAP9 &gt; SAP3 &gt; SAP7 &gt; SAP4 &gt; SAP1 &gt; SAP8. The first cleavage occurs between residues 'Lys-17' and 'His-18' of Hst 5, giving DSHAKRHHGYKRKFHEK and HHSHRGY peptides. Simultaneously, the DSHAKRHHGYKRK peptide is also formed. Further fragmentation by SAP9 results in FHEK product. In Candida albicans (strain SC5314 / ATCC MYA-2876) (Yeast), this protein is Secreted aspartic protease 9.